The primary structure comprises 123 residues: Photosystem II extrinsic protein U (123 aa).

Residues 1-28 (MKTLARILVVFTLIVGLIGFFNPLPAQA) form the signal peptide.

The protein belongs to the PsbU family. In terms of assembly, PSII is composed of 1 copy each of membrane proteins PsbA, PsbB, PsbC, PsbD, PsbE, PsbF, PsbH, PsbI, PsbJ, PsbK, PsbL, PsbM, PsbT, PsbX, PsbY, PsbZ, Psb30/Ycf12, peripheral proteins PsbO, CyanoQ (PsbQ), PsbU, PsbV and a large number of cofactors. It forms dimeric complexes.

The protein resides in the cellular thylakoid membrane. One of the extrinsic, lumenal subunits of photosystem II (PSII). PSII is a light-driven water plastoquinone oxidoreductase, using light energy to abstract electrons from H(2)O, generating a proton gradient subsequently used for ATP formation. The extrinsic proteins stabilize the structure of photosystem II oxygen-evolving complex (OEC), the ion environment of oxygen evolution and protect the OEC against heat-induced inactivation. The polypeptide is Photosystem II extrinsic protein U (Gloeothece citriformis (strain PCC 7424) (Cyanothece sp. (strain PCC 7424))).